The sequence spans 538 residues: Xylosidase/arabinosidase 43B (538 aa).

Catalysis depends on Glu-367, which acts as the Proton donor.

It belongs to the glycosyl hydrolase 43 family.

It carries out the reaction Hydrolysis of (1-&gt;4)-beta-D-xylans, to remove successive D-xylose residues from the non-reducing termini.. The catalysed reaction is Hydrolysis of terminal non-reducing alpha-L-arabinofuranoside residues in alpha-L-arabinosides.. With respect to regulation, activity is inhibited by Ag(+), Li(+), Cu(2+), Cr(3+), Co(3+), Ni(2+), Mg(2+), Zn(2+), EDTA, SDS and beta-mercaptoethanol; but not by Mn(2+), Pb(2+), Ca(2+) and Fe(3+). In terms of biological role, bifunctional beta-xylosidase/alpha-L-arabinosidases with a low level of xylanase activity. Is most active on 4-nitrophenyl beta-D-xylopyranoside (pNPX) (defined as 100%), moderate on p-nitrophenyl-alpha-L-arabinofuranoside (pNPA) (56.6%), and weak on beechwood xylan (5.7%) and birchwood xylan (2.7%). Is able to attack xylooligosacchardies with degrees of polymerisation of 2-5, releasing the amounts of reducing sugars in the order of xylopentose &gt; xylotetraose &gt; xylotriose &gt; xylobiose, i.e. the rate of xylose released from xylooligosacchardies increased with the chain length. No activity was detected in the presence of carboxymethyl cellulose-sodium (CMC-Na), sugar beet arabinan, AZCL-arabinan (debranched), 4-nitrophenyl a-D - galactopyranoside, 2-nitrophenyl beta-D-galactopyranoside, and 4-nitrophenyl alpha-D-glucopyranoside. This is Xylosidase/arabinosidase 43B from Humicola insolens (Soft-rot fungus).